The chain runs to 415 residues: tRNA (cytosine(38)-C(5))-methyltransferase (415 aa).

In terms of domain architecture, SAM-dependent MTase C5-type spans 4–396 (LRVLELYSGI…TVLCEGFGNA (393 aa)). S-adenosyl-L-methionine is bound by residues 13–15 (IGG), Asp34, 57–58 (IE), and Ser76. Residue Cys79 is part of the active site. Residue Ser376 coordinates S-adenosyl-L-methionine.

This sequence belongs to the class I-like SAM-binding methyltransferase superfamily. C5-methyltransferase family. As to expression, highly expressed in thymus, testis, and at much lower levels in spleen, lung, brain, heart, kidney, liver, skeletal muscle and embryonic stem cells.

The protein localises to the cytoplasm. The enzyme catalyses cytidine(38) in tRNA + S-adenosyl-L-methionine = 5-methylcytidine(38) in tRNA + S-adenosyl-L-homocysteine + H(+). Functionally, specifically methylates cytosine 38 in the anticodon loop of tRNA(Asp). Has higher activity on tRNA(Asp) modified with queuosine at position 34. This is tRNA (cytosine(38)-C(5))-methyltransferase (Trdmt1) from Mus musculus (Mouse).